The chain runs to 547 residues: Glucose-6-phosphate isomerase (547 aa).

The active-site Proton donor is the Glu-351. Catalysis depends on residues His-382 and Lys-510.

The protein belongs to the GPI family.

The protein localises to the cytoplasm. The enzyme catalyses alpha-D-glucose 6-phosphate = beta-D-fructose 6-phosphate. Its pathway is carbohydrate biosynthesis; gluconeogenesis. The protein operates within carbohydrate degradation; glycolysis; D-glyceraldehyde 3-phosphate and glycerone phosphate from D-glucose: step 2/4. Functionally, catalyzes the reversible isomerization of glucose-6-phosphate to fructose-6-phosphate. This Beijerinckia indica subsp. indica (strain ATCC 9039 / DSM 1715 / NCIMB 8712) protein is Glucose-6-phosphate isomerase.